Consider the following 99-residue polypeptide: A-type ATP synthase subunit F (99 aa).

It belongs to the V-ATPase F subunit family. Has multiple subunits with at least A(3), B(3), C, D, E, F, H, I and proteolipid K(x).

The protein resides in the cell membrane. Component of the A-type ATP synthase that produces ATP from ADP in the presence of a proton gradient across the membrane. The sequence is that of A-type ATP synthase subunit F from Methanothrix thermoacetophila (strain DSM 6194 / JCM 14653 / NBRC 101360 / PT) (Methanosaeta thermophila).